The chain runs to 208 residues: MNYPNGKPYRKNSAIDGGKKTAAFSNIEYGGRGMSLEKDIEHSNTFYLKSDIAVIHKKPTPVQIVNVNYPKRSKAVINEAYFRTPSTTDYNGVYQGYYIDFEAKETKNKTSFPLNNIHDHQVEHMKNAYQQKGIVFLMIRFKTLDEVYLLPYSKFEVFWKRYKDNIKKSITVDEIRKNGYHIPYQYQPRLDYLKAVDKLILDESEDRV.

4 residues coordinate Mg(2+): threonine 87, aspartate 89, glutamate 102, and glutamine 121.

It belongs to the RecU family. Mg(2+) is required as a cofactor.

It is found in the cytoplasm. It carries out the reaction Endonucleolytic cleavage at a junction such as a reciprocal single-stranded crossover between two homologous DNA duplexes (Holliday junction).. Endonuclease that resolves Holliday junction intermediates in genetic recombination. Cleaves mobile four-strand junctions by introducing symmetrical nicks in paired strands. Promotes annealing of linear ssDNA with homologous dsDNA. Required for DNA repair, homologous recombination and chromosome segregation. This Staphylococcus aureus (strain Mu3 / ATCC 700698) protein is Holliday junction resolvase RecU.